Reading from the N-terminus, the 82-residue chain is Cytochrome b559 subunit alpha (82 aa).

A helical membrane pass occupies residues Ile-22–Phe-36. A heme-binding site is contributed by His-24.

Belongs to the PsbE/PsbF family. Heterodimer of an alpha subunit and a beta subunit. PSII is composed of 1 copy each of membrane proteins PsbA, PsbB, PsbC, PsbD, PsbE, PsbF, PsbH, PsbI, PsbJ, PsbK, PsbL, PsbM, PsbT, PsbX, PsbY, Psb30/Ycf12, peripheral proteins PsbO, CyanoQ (PsbQ), PsbU, PsbV and a large number of cofactors. It forms dimeric complexes. Heme b serves as cofactor.

It is found in the cellular thylakoid membrane. In terms of biological role, this b-type cytochrome is tightly associated with the reaction center of photosystem II (PSII). PSII is a light-driven water:plastoquinone oxidoreductase that uses light energy to abstract electrons from H(2)O, generating O(2) and a proton gradient subsequently used for ATP formation. It consists of a core antenna complex that captures photons, and an electron transfer chain that converts photonic excitation into a charge separation. In Prochlorococcus marinus (strain SARG / CCMP1375 / SS120), this protein is Cytochrome b559 subunit alpha.